We begin with the raw amino-acid sequence, 679 residues long: Acetyl-coenzyme A synthetase 2 (679 aa).

The interval 1-32 (MTSSPTHQVVHEANNIKKQETPKEFFERQPRQ) is disordered. Residues 14-30 (NNIKKQETPKEFFERQP) show a composition bias toward basic and acidic residues. CoA is bound by residues 207 to 210 (RGGK) and T326. ATP is bound by residues 402 to 404 (GEP), 426 to 431 (DTYWQT), D517, and R532. S540 contributes to the CoA binding site. R543 contacts ATP. R611 serves as a coordination point for CoA.

Belongs to the ATP-dependent AMP-binding enzyme family.

The catalysed reaction is acetate + ATP + CoA = acetyl-CoA + AMP + diphosphate. The protein is Acetyl-coenzyme A synthetase 2 (ACS2) of Debaryomyces hansenii (strain ATCC 36239 / CBS 767 / BCRC 21394 / JCM 1990 / NBRC 0083 / IGC 2968) (Yeast).